Reading from the N-terminus, the 320-residue chain is Cytochrome f (320 aa).

The signal sequence occupies residues 1–35; that stretch reads MRNINTYDWMKKWMTRSISILVMIHMITRTSISNA. Residues Tyr36, Cys56, Cys59, and His60 each coordinate heme. The helical transmembrane segment at 286 to 306 threads the bilayer; that stretch reads VQGLLLLLASVILAQIFLVLK.

It belongs to the cytochrome f family. The 4 large subunits of the cytochrome b6-f complex are cytochrome b6, subunit IV (17 kDa polypeptide, petD), cytochrome f and the Rieske protein, while the 4 small subunits are PetG, PetL, PetM and PetN. The complex functions as a dimer. It depends on heme as a cofactor.

Its subcellular location is the plastid. It is found in the chloroplast thylakoid membrane. Its function is as follows. Component of the cytochrome b6-f complex, which mediates electron transfer between photosystem II (PSII) and photosystem I (PSI), cyclic electron flow around PSI, and state transitions. The sequence is that of Cytochrome f from Cycas taitungensis (Prince sago).